We begin with the raw amino-acid sequence, 232 residues long: Protein lin-7 homolog A (232 aa).

The Kinase interacting site motif lies at 14–28 (MATLTVVQPLTLDRD). The L27 domain occupies 25–80 (LDRDVARAIELLEKLQESGEVPVHKLQSLKKVLQSEFCTAIREVYQYMHETITVNG). The PDZ domain maps to 108–190 (VVELPKTDEG…SVKLVVRYTP (83 aa)).

This sequence belongs to the lin-7 family. In terms of assembly, forms a complex with CASK and CASKIN1. Component of the brain-specific heterotrimeric complex (LIN-10-LIN-2-LIN-7 complex) composed of at least APBA1, CASK, and LIN7, which associates with the motor protein KIF17 to transport vesicles along microtubules. Can also interact with other modular proteins containing protein-protein interaction domains like PALS1, PALS2, MPP7, DLG1, DLG2 and DLG3 through its L27 domain. Interacts with DLG4 and GRIN2B as well as CDH1 and CTNNB1, the channels KCNJ12/Kir2.2, KCNJ4/Kir2.3 and probably KCNJ2/Kir2.1 and SLC6A12/BGT-1 via its PDZ domain. The association of LIN7A with cadherin and beta-catenin is calcium-dependent, occurs at synaptic junctions and requires the actin cytoskeleton. Interacts with EGFR, ERBB2, ERBB3 and ERBB4 with both PDZ and KID domains. Associates with KIF17 via APBA1. Interacts with HTR4. Forms a tripartite complex composed of DLG1, MPP7 and LIN7 (LIN7A or LIN7C). Interacts with MARCHF11. As to expression, ubiquitously expressed in brain and detected in lung, liver and testis (at protein level). Expression was detected only in brain.

The protein localises to the cell membrane. The protein resides in the basolateral cell membrane. It localises to the cell junction. It is found in the postsynaptic density membrane. Its subcellular location is the tight junction. Plays a role in establishing and maintaining the asymmetric distribution of channels and receptors at the plasma membrane of polarized cells. Forms membrane-associated multiprotein complexes that may regulate delivery and recycling of proteins to the correct membrane domains. The tripartite complex composed of LIN7 (LIN7A, LIN7B or LIN7C), CASK and APBA1 associates with the motor protein KIF17 to transport vesicles containing N-methyl-D-aspartate (NMDA) receptor subunit NR2B along microtubules. This complex may have the potential to couple synaptic vesicle exocytosis to cell adhesion in brain. Ensures the proper localization of GRIN2B (subunit 2B of the NMDA receptor) to neuronal postsynaptic density and may function in localizing synaptic vesicles at synapses where it is recruited by beta-catenin and cadherin. Required to localize Kir2 channels, GABA transporter (SLC6A12) and EGFR/ERBB1, ERBB2, ERBB3 and ERBB4 to the basolateral membrane of epithelial cells. In Rattus norvegicus (Rat), this protein is Protein lin-7 homolog A (Lin7a).